Here is a 226-residue protein sequence, read N- to C-terminus: Protein DEHYDRATION-INDUCED 19 (226 aa).

The segment at Phe-158–Ala-208 is disordered. Positions Leu-196–Arg-205 are enriched in basic and acidic residues.

It belongs to the Di19 family.

This Oryza sativa subsp. japonica (Rice) protein is Protein DEHYDRATION-INDUCED 19 (DI19-1).